The chain runs to 159 residues: Succinate dehydrogenase [ubiquinone] cytochrome b small subunit, mitochondrial (159 aa).

The transit peptide at 1 to 36 (MATLWRLSVLCGARGGGALVLRTSVVRPAHVSAFLQ) directs the protein to the mitochondrion. Residues 37-63 (DRHTPGWCGVQHIHLSPSHQASSKAAS) lie on the Mitochondrial matrix side of the membrane. A helical membrane pass occupies residues 64 to 85 (LHWTGERVVSVLLLGLLPAAYL). The Mitochondrial intermembrane portion of the chain corresponds to 86-90 (NPCSA). A helical transmembrane segment spans residues 91–111 (MDYSLAAALTLHGHWGIGQVV). Histidine 102 contributes to the heme b binding site. Residues 112-120 (TDYVRGDAL) are Mitochondrial matrix-facing. Residue tyrosine 114 participates in a ubiquinone binding. A helical transmembrane segment spans residues 121–142 (QKVAKAGLLALSAFTFAGLCYF). Residues 143 to 159 (NYHDVGICKAVAMLWKL) lie on the Mitochondrial intermembrane side of the membrane.

The protein belongs to the CybS family. As to quaternary structure, component of complex II composed of four subunits: the flavoprotein (FP) SDHA, iron-sulfur protein (IP) SDHB, and a cytochrome b560 composed of SDHC and SDHD.

It localises to the mitochondrion inner membrane. It functions in the pathway carbohydrate metabolism; tricarboxylic acid cycle. Its function is as follows. Membrane-anchoring subunit of succinate dehydrogenase (SDH) that is involved in complex II of the mitochondrial electron transport chain and is responsible for transferring electrons from succinate to ubiquinone (coenzyme Q). SDH also oxidizes malate to the non-canonical enol form of oxaloacetate, enol-oxaloacetate. Enol-oxaloacetate, which is a potent inhibitor of the succinate dehydrogenase activity, is further isomerized into keto-oxaloacetate. This Sus scrofa (Pig) protein is Succinate dehydrogenase [ubiquinone] cytochrome b small subunit, mitochondrial (SDHD).